The primary structure comprises 766 residues: MEESNPAPTSCTSKGKHSKVSDLISHFEGGSVLSSYIDLQKDSTMNLNIPQTLGQPGLTSSPPRKFLPQHSPQKQENDPDQTQGQHGCLANGVVAAQNQMECEDEKETTLSPEMAIQTAAASPDTHVLNGERNETITDSASSIANSHDENASDSSCRTPGTDLGLPSKEGEPGMDAELQERENGVNTMGLDTLDQHHEVKETNEQKLHKIATELLLTERAYVSRLDLLDQVFYCKLLEEANRGSFPAEMVNKIFSNISSINAFHSKFLLPELEKRMQEWETTPRIGDILQKLAPFLKMYGEYVKGFDNAVELVKTMTERVPQFKSVTEEIQKQKICGSLTLQHHMLEPIQRIPRYEMLLKDYLKKLSPDSPDWNDAKKSLEIISTAASHSNSAIRKMENLKKLLEIYEMLGEEEDIVNPSNELIKEGQILKLAARNTSAQERYLFLFNNMLLYCVPRFSLVGSKFTVRTRVGIDGMKIVETHNEEYPHTFQISGKERTLELQASSEQDKEEWIKALQESIDAFHQRHETFRNAIAKENDIPLEVSTAELGKRAPRWIRDNEVTMCMKCKESFNALTRRRHHCRACGHVVCWKCSDYKAQLEYDGGRLNKVCKDCYQIISGFTDSEEKKRRGILEIESAEVSGNSEVCSFLQYMEKSKPWQKIWCVIPKQDPLVLYMYGAPQDVRAQATIPLLGYVVDDMPKSADLPHSFKLTQSKSVHSFAADNEELKQKWLKIILLAVTGETPDGPSEHLATLNNLPGPKKKSEC.

The tract at residues 1 to 150 (MEESNPAPTS…SSIANSHDEN (150 aa)) is actin filament-binding. Composition is skewed to polar residues over residues 47–62 (LNIP…TSSP) and 70–85 (HSPQ…TQGQ). 2 disordered regions span residues 47 to 86 (LNIP…QGQH) and 143 to 173 (IANS…GEPG). The DH domain occupies 206–393 (KLHKIATELL…STAASHSNSA (188 aa)). The PH 1 domain occupies 422–521 (ELIKEGQILK…WIKALQESID (100 aa)). The FYVE-type zinc-finger motif lies at 559–619 (DNEVTMCMKC…VCKDCYQIIS (61 aa)). Positions 565, 568, 582, 585, 590, 593, 611, and 614 each coordinate Zn(2+). The PH 2 domain occupies 643-740 (NSEVCSFLQY…WLKIILLAVT (98 aa)). Serine 702 and serine 716 each carry phosphoserine. Residues 746–766 (GPSEHLATLNNLPGPKKKSEC) form a disordered region.

Homooligomer. As to expression, detected in thymus, lung, heart, skeletal muscle, small intestine, liver, kidney, spleen and testis. Expressed in all parts of the brain and in the spinal cord at embryonic, postnatal, and adult stages. Levels of expression are lower in postnatal and adult tissues than in embryonic tissues.

The protein localises to the cytoplasm. It is found in the cytoskeleton. It localises to the cell projection. Its subcellular location is the filopodium. Functionally, activates CDC42, a member of the Ras-like family of Rho- and Rac proteins, by exchanging bound GDP for free GTP. Activates MAPK8. Plays a role in regulating the actin cytoskeleton and cell shape. Promotes the formation of lamellipodia. The polypeptide is FYVE, RhoGEF and PH domain-containing protein 4 (Fgd4) (Mus musculus (Mouse)).